A 142-amino-acid chain; its full sequence is Large ribosomal subunit protein uL13 (142 aa).

Belongs to the universal ribosomal protein uL13 family. In terms of assembly, part of the 50S ribosomal subunit.

Its function is as follows. This protein is one of the early assembly proteins of the 50S ribosomal subunit, although it is not seen to bind rRNA by itself. It is important during the early stages of 50S assembly. In Akkermansia muciniphila (strain ATCC BAA-835 / DSM 22959 / JCM 33894 / BCRC 81048 / CCUG 64013 / CIP 107961 / Muc), this protein is Large ribosomal subunit protein uL13.